A 306-amino-acid polypeptide reads, in one-letter code: Meiotically up-regulated gene 73 protein (306 aa).

Transmembrane regions (helical) follow at residues 28–48 (YWAV…VSIF), 59–79 (FFSI…CNYG), 103–123 (YIQW…TVGV), 125–145 (ILEI…LLAA), 154–174 (WAYY…SVVL), 190–210 (FLWS…CWIL), and 224–244 (IFYS…FSWM).

Belongs to the archaeal/bacterial/fungal opsin family.

It localises to the membrane. Has a role in meiosis. The sequence is that of Meiotically up-regulated gene 73 protein (mug73) from Schizosaccharomyces pombe (strain 972 / ATCC 24843) (Fission yeast).